A 356-amino-acid polypeptide reads, in one-letter code: Cysteine proteinase 3 (356 aa).

An N-terminal signal peptide occupies residues 1–16 (MSRLSLVLILVAGLFA). The propeptide at 17-138 (TALAGPATFA…KGNLKLTNVV (122 aa)) is activation peptide. Residue Asn123 is glycosylated (N-linked (GlcNAc...) asparagine). Disulfide bonds link Cys160/Cys203 and Cys194/Cys236. Cys163 is an active-site residue. Asn252 carries N-linked (GlcNAc...) asparagine glycosylation. A disulfide bridge links Cys294 with Cys344. Catalysis depends on residues His303 and Asn323.

The protein belongs to the peptidase C1 family. As to expression, predominantly expressed in stem and root.

The protein resides in the vacuole. The chain is Cysteine proteinase 3 (CYP-3) from Solanum lycopersicum (Tomato).